The primary structure comprises 438 residues: ATP-dependent protease ATPase subunit HslU (438 aa).

ATP-binding positions include I18, 60–65 (GVGKTE), D251, E316, and R388.

This sequence belongs to the ClpX chaperone family. HslU subfamily. In terms of assembly, a double ring-shaped homohexamer of HslV is capped on each side by a ring-shaped HslU homohexamer. The assembly of the HslU/HslV complex is dependent on binding of ATP.

It is found in the cytoplasm. ATPase subunit of a proteasome-like degradation complex; this subunit has chaperone activity. The binding of ATP and its subsequent hydrolysis by HslU are essential for unfolding of protein substrates subsequently hydrolyzed by HslV. HslU recognizes the N-terminal part of its protein substrates and unfolds these before they are guided to HslV for hydrolysis. In Jannaschia sp. (strain CCS1), this protein is ATP-dependent protease ATPase subunit HslU.